Reading from the N-terminus, the 368-residue chain is 2-deoxy-scyllo-inosose synthase (368 aa).

NAD(+)-binding positions include D42, E72–K75, G104–N108, T128–T129, S139–K141, K150–N151, and Q176. K141 is a catalytic residue. E183 contacts Co(2+). E243 is an active-site residue. The Co(2+) site is built by H246 and H262.

It belongs to the sugar phosphate cyclases superfamily. DOI synthase family. As to quaternary structure, was isolated as a heterodimeric enzyme comprising of BtrC and a smaller polypeptide further identified as PdxT by sequence homology. Homodimer in solution. The cofactor is NAD(+). Requires Co(2+) as cofactor.

The catalysed reaction is D-glucose 6-phosphate = 2-deoxy-L-scyllo-inosose + phosphate. It participates in metabolic intermediate biosynthesis; 2-deoxystreptamine biosynthesis; 2-deoxystreptamine from D-glucose 6-phosphate: step 1/4. It functions in the pathway antibiotic biosynthesis; butirosin biosynthesis. Its activity is regulated as follows. Strongly inhibited by EDTA, zinc and Cu(2+). Its function is as follows. Catalyzes the intramolecular carbocycle formation from D-glucose-6-phosphate to 2-deoxy-scyllo-inosose (DOI). This Niallia circulans (Bacillus circulans) protein is 2-deoxy-scyllo-inosose synthase (btrC).